A 155-amino-acid chain; its full sequence is Transcriptional repressor NrdR (155 aa).

Residues 3 to 34 (CPKCDHNGTRVLDSRPVQDHYSIRRRRECEKC) fold into a zinc finger. Residues 49 to 139 (LIIVKKDGNR…VYRQFKDITV (91 aa)) form the ATP-cone domain.

Belongs to the NrdR family. It depends on Zn(2+) as a cofactor.

Its function is as follows. Negatively regulates transcription of bacterial ribonucleotide reductase nrd genes and operons by binding to NrdR-boxes. In Exiguobacterium sp. (strain ATCC BAA-1283 / AT1b), this protein is Transcriptional repressor NrdR.